Reading from the N-terminus, the 223-residue chain is Cytidine deaminase 3 (223 aa).

CMP/dCMP-type deaminase domains are found at residues 21–154 (TEPM…FSPD) and 184–223 (SDCS…WYRG). 62–64 (NVE) contacts substrate. Zn(2+) is bound at residue histidine 75. The active-site Proton donor is glutamate 77. Residues cysteine 110 and cysteine 113 each contribute to the Zn(2+) site.

It belongs to the cytidine and deoxycytidylate deaminase family. In terms of assembly, homodimer. Zn(2+) serves as cofactor.

The enzyme catalyses cytidine + H2O + H(+) = uridine + NH4(+). The catalysed reaction is 2'-deoxycytidine + H2O + H(+) = 2'-deoxyuridine + NH4(+). This enzyme scavenges exogenous and endogenous cytidine and 2'-deoxycytidine for UMP synthesis. The protein is Cytidine deaminase 3 (CDA3) of Arabidopsis thaliana (Mouse-ear cress).